A 95-amino-acid chain; its full sequence is uncharacterized protein (95 aa).

Positions 1 to 17 are cleaved as a signal peptide; that stretch reads MTSSLVIYIFLWSRLIC.

This is an uncharacterized protein from Saccharomyces cerevisiae (strain ATCC 204508 / S288c) (Baker's yeast).